The primary structure comprises 201 residues: Twin horsetail protein 2 (201 aa).

It is found in the nucleus. Its function is as follows. Required for correct meiotic chromosome segregation and recombination. This chain is Twin horsetail protein 2 (tht2), found in Schizosaccharomyces pombe (strain 972 / ATCC 24843) (Fission yeast).